The sequence spans 198 residues: Single-stranded DNA cytosine deaminase (198 aa).

Residues 1 to 30 (MDSLLMKQKKFLYHFKNVRWAKGRHETYLC) carry the Bipartite nuclear localization signal motif. The segment at 2–26 (DSLLMKQKKFLYHFKNVRWAKGRHE) is interaction with SUPT6H. The CMP/dCMP-type deaminase domain maps to 23-129 (GRHETYLCYV…KAEPEGLRRL (107 aa)). Residue threonine 27 is modified to Phosphothreonine; by PKA. Serine 38 bears the Phosphoserine; by PKA mark. The important for interaction with CTNNBL1 stretch occupies residues 39–42 (ATSC). Histidine 56 is a binding site for Zn(2+). The Proton donor role is filled by glutamate 58. Positions 87 and 90 each coordinate Zn(2+). A required for interaction with RNF126 region spans residues 88–116 (YDCARHVAEFLRWNPNLSLRIFTARLYFC). Positions 183–198 (LYEVDDLRDAFRMLGF) match the Nuclear export signal motif.

Belongs to the cytidine and deoxycytidylate deaminase family. Interacts with CTNNBL1; the interaction is important for the immunoglobulin switch activity of AICDA. Interacts (via its NLS) with KPNA1. Interacts with PKA/PRKACA and PRKAR1A/PKR1. Interacts with SUPT6H, TRIM28 and NCL. Directly interacts with MCM3AP/GANP; this interaction may favor AICDA recruitment to immunoglobulin variable region genes, hence promoting somatic hypermutations. It depends on Zn(2+) as a cofactor. Ser-38 is the major site whereas Thr-27 is the minor site of phosphorylation. Phosphorylation regulates its class-switch recombination activity. Post-translationally, probably monoubiquitinated on several residues by RNF126. In terms of tissue distribution, expressed in germinal center B-cells (at protein level).

The protein resides in the nucleus. It localises to the cytoplasm. It carries out the reaction a 2'-deoxycytidine in single-stranded DNA + H2O + H(+) = a 2'-deoxyuridine in single-stranded DNA + NH4(+). Functionally, single-stranded DNA-specific cytidine deaminase. Involved in somatic hypermutation (SHM), gene conversion, and class-switch recombination (CSR) in B-lymphocytes by deaminating C to U during transcription of Ig-variable (V) and Ig-switch (S) region DNA. Required for several crucial steps of B-cell terminal differentiation necessary for efficient antibody responses. May also play a role in the epigenetic regulation of gene expression by participating in DNA demethylation. This Mus musculus (Mouse) protein is Single-stranded DNA cytosine deaminase (Aicda).